Here is a 425-residue protein sequence, read N- to C-terminus: 5-hydroxytryptamine receptor 7 (425 aa).

Topologically, residues 1-72 (MLIQVQPSHL…LLYGDTEKIV (72 aa)) are extracellular. Asparagine 14, asparagine 41, and asparagine 51 each carry an N-linked (GlcNAc...) asparagine glycan. The helical transmembrane segment at 73-97 (IGVVLSIITLFTIAGNALVIISVCI) threads the bilayer. The Cytoplasmic portion of the chain corresponds to 98 to 107 (VKKLRQPSNY). Residues 108–129 (LVVSLAAADLSVAVAVMPFVII) form a helical membrane-spanning segment. The Extracellular portion of the chain corresponds to 130–141 (TDLVGGEWLFGK). A helical membrane pass occupies residues 142 to 167 (VFCNVFIAMDVMCCTASIMTLCVISV). An intrachain disulfide couples cysteine 144 to cysteine 220. Aspartate 151 serves as a coordination point for serotonin. Topologically, residues 168–187 (DRYLGITRPLTYPARQNGKL) are cytoplasmic. The helical transmembrane segment at 188-208 (MAKMVFIVWLLSASITLPPLF) threads the bilayer. Over 209–226 (GWAKNVNVERVCLISQDF) the chain is Extracellular. The helical transmembrane segment at 227–249 (GYTVYSTAVAFYIPMTVMLVMYQ) threads the bilayer. Topologically, residues 250-322 (RIFVAAKISA…SIFKREQKAA (73 aa)) are cytoplasmic. The chain crosses the membrane as a helical span at residues 323 to 348 (RTLGIIVGAFTFCWLPFFLLSTARPF). At 349–359 (ICGIMCSCMPL) the chain is on the extracellular side. The chain crosses the membrane as a helical span at residues 360-383 (RLERTLLWLGYTNSLINPLIYAFF). The Cytoplasmic segment spans residues 384 to 425 (NRDLRTTFWNLLRCKYTNINRRLSAASMHEALKVTERHEGIL). A lipid anchor (S-palmitoyl cysteine) is attached at cysteine 397.

It belongs to the G-protein coupled receptor 1 family.

It localises to the cell membrane. Functionally, G-protein coupled receptor for 5-hydroxytryptamine (serotonin), a biogenic hormone that functions as a neurotransmitter, a hormone and a mitogen. Ligand binding causes a conformation change that triggers signaling via guanine nucleotide-binding proteins (G proteins) and modulates the activity of downstream effectors. HTR7 is coupled to G(s) G alpha proteins and mediates activation of adenylate cyclase activity. This Xenopus laevis (African clawed frog) protein is 5-hydroxytryptamine receptor 7 (htr7).